The chain runs to 327 residues: MSDRSLSELGEQGLLPLLQAFCPAEQRGDDAAILTPPAGQQLVVSSDVLVEGIHFSEATTPPAAIGWRAAAANLSDLAAMGATPAGITLALALPSDRRLSWLQQIYQGLDRCLKQYDCPLIGGDLSRSPTATLAVTALGWVNPNRVIRRSTAQVGDWIMATGTHGLSRLGLGHLLGEWTLAEPLRDQAIAAHQAPKPRLDVVPLLARSQPAGTVWRVAGMDSSDGLADAVLQICRASQVGAVIEALPLPATTSFDRDRLIQAALYGGEDFELVLCLSPDWAQALLELLGEQAQVIGQITEKPVVQLRLSDRTEILSLDRGFQHFTTH.

Positions 30, 45, 46, and 47 each coordinate Mg(2+). Position 54 (His54) interacts with substrate. Position 76 (Asp76) interacts with Mg(2+). ATP is bound by residues Tyr106, 123–124 (GD), and Arg149. Asp124 is a binding site for Mg(2+). Asp221 lines the Mg(2+) pocket. ATP is bound at residue Ser223. Residue Asp224 coordinates Mg(2+). Substrate-binding residues include Glu268 and Phe321.

Belongs to the thiamine-monophosphate kinase family.

The enzyme catalyses thiamine phosphate + ATP = thiamine diphosphate + ADP. It participates in cofactor biosynthesis; thiamine diphosphate biosynthesis; thiamine diphosphate from thiamine phosphate: step 1/1. Its function is as follows. Catalyzes the ATP-dependent phosphorylation of thiamine-monophosphate (TMP) to form thiamine-pyrophosphate (TPP), the active form of vitamin B1. In Synechococcus elongatus (strain ATCC 33912 / PCC 7942 / FACHB-805) (Anacystis nidulans R2), this protein is Thiamine-monophosphate kinase.